The sequence spans 604 residues: Glutamine--fructose-6-phosphate aminotransferase [isomerizing] (604 aa).

Residue C2 is the Nucleophile; for GATase activity of the active site. One can recognise a Glutamine amidotransferase type-2 domain in the interval 2–218; sequence CGIVGVVGNT…DKELVIVKKD (217 aa). 2 consecutive SIS domains span residues 284–423 and 456–594; these read IIKS…ANGK and VEQL…VDKP. K599 acts as the For Fru-6P isomerization activity in catalysis.

As to quaternary structure, homodimer.

Its subcellular location is the cytoplasm. It catalyses the reaction D-fructose 6-phosphate + L-glutamine = D-glucosamine 6-phosphate + L-glutamate. In terms of biological role, catalyzes the first step in hexosamine metabolism, converting fructose-6P into glucosamine-6P using glutamine as a nitrogen source. The sequence is that of Glutamine--fructose-6-phosphate aminotransferase [isomerizing] from Streptococcus agalactiae serotype III (strain NEM316).